Here is a 336-residue protein sequence, read N- to C-terminus: Anthranilate phosphoribosyltransferase (336 aa).

5-phospho-alpha-D-ribose 1-diphosphate-binding positions include Gly-83, Gly-86 to Asp-87, Thr-91, Asn-93 to Thr-96, Lys-111 to Ser-119, and Ser-123. Gly-83 serves as a coordination point for anthranilate. Position 95 (Ser-95) interacts with Mg(2+). Anthranilate is bound at residue Asn-114. Arg-169 contributes to the anthranilate binding site. 2 residues coordinate Mg(2+): Asp-227 and Glu-228.

The protein belongs to the anthranilate phosphoribosyltransferase family. Homodimer. Requires Mg(2+) as cofactor.

The enzyme catalyses N-(5-phospho-beta-D-ribosyl)anthranilate + diphosphate = 5-phospho-alpha-D-ribose 1-diphosphate + anthranilate. It functions in the pathway amino-acid biosynthesis; L-tryptophan biosynthesis; L-tryptophan from chorismate: step 2/5. Its function is as follows. Catalyzes the transfer of the phosphoribosyl group of 5-phosphorylribose-1-pyrophosphate (PRPP) to anthranilate to yield N-(5'-phosphoribosyl)-anthranilate (PRA). In Vibrio campbellii (strain ATCC BAA-1116), this protein is Anthranilate phosphoribosyltransferase.